Here is a 257-residue protein sequence, read N- to C-terminus: S-methyl-5'-thioadenosine phosphorylase (257 aa).

Phosphate contacts are provided by residues serine 10 and arginine 50 to histidine 51. Cysteine 130 and cysteine 195 are joined by a disulfide. Methionine 180 provides a ligand contact to substrate. Threonine 181 is a binding site for phosphate. Residue aspartate 204 to aspartate 206 coordinates substrate. An intrachain disulfide couples cysteine 246 to cysteine 248.

This sequence belongs to the PNP/MTAP phosphorylase family. MTAP subfamily. Homohexamer. Dimer of a homotrimer.

It carries out the reaction S-methyl-5'-thioadenosine + phosphate = 5-(methylsulfanyl)-alpha-D-ribose 1-phosphate + adenine. It participates in amino-acid biosynthesis; L-methionine biosynthesis via salvage pathway; S-methyl-5-thio-alpha-D-ribose 1-phosphate from S-methyl-5'-thioadenosine (phosphorylase route): step 1/1. Functionally, catalyzes the reversible phosphorylation of S-methyl-5'-thioadenosine (MTA) to adenine and 5-methylthioribose-1-phosphate. Involved in the breakdown of MTA, a major by-product of polyamine biosynthesis. Responsible for the first step in the methionine salvage pathway after MTA has been generated from S-adenosylmethionine. Has broad substrate specificity with 6-aminopurine nucleosides as preferred substrates. This is S-methyl-5'-thioadenosine phosphorylase from Pyrococcus furiosus (strain ATCC 43587 / DSM 3638 / JCM 8422 / Vc1).